Reading from the N-terminus, the 118-residue chain is MDLIIQNLEKEYMKKDIPEIWPGDTVRVHYRIVEGDKERIQVYEGVVIAKKHGGIRETITVRKVVQGVGVERIFPLHSPLVEKIEVVRRGRVRRAKLYYLRERKGKSAKIAEREENEG.

It belongs to the bacterial ribosomal protein bL19 family.

In terms of biological role, this protein is located at the 30S-50S ribosomal subunit interface and may play a role in the structure and function of the aminoacyl-tRNA binding site. The chain is Large ribosomal subunit protein bL19 from Dictyoglomus turgidum (strain DSM 6724 / Z-1310).